Here is a 252-residue protein sequence, read N- to C-terminus: Sororin (252 aa).

2 disordered regions span residues Met1–Thr48 and Ala72–Val142. Phosphoserine is present on residues Ser21, Ser33, Ser35, Ser75, Ser79, and Ser83. Residues Leu86–Lys104 are compositionally biased toward basic and acidic residues. The KEN box motif lies at Lys88–Asn90. Residue Thr98 is modified to Phosphothreonine. Residues Thr105–Pro116 are compositionally biased toward low complexity. Residue Ser107 is modified to Phosphoserine. 2 positions are modified to phosphothreonine: Thr111 and Thr115. The span at Ser124–Lys140 shows a compositional bias: basic and acidic residues. A Phosphoserine modification is found at Ser154. Thr159 carries the phosphothreonine modification. The FGF motif motif lies at Phe166–Phe168. Residues Trp199 to Met222 form a disordered region. Ser209 is subject to Phosphoserine. The segment at Leu230 to Glu252 is C-terminal Sororin domain.

The protein belongs to the sororin family. Interacts with the APC/C complex. Interacts with the chromatin-bound cohesin complex; the interaction is indirect, occurs after DNA replication and requires acetylation of the cohesin component SMC3. Interacts (via the FGF motif) with PDS5A and PDS5B; the interaction is direct and prevents the interaction of PDS5A with WAPL. Post-translationally, phosphorylated. Phosphorylation, as cells enter mitosis, disrupts the interaction with PDS5A and relieves the inhibition of WAPL by CDCA5. In terms of processing, ubiquitinated by the APC/C complex in G1, leading to its degradation.

Its subcellular location is the nucleus. The protein resides in the chromosome. It is found in the cytoplasm. Functionally, regulator of sister chromatid cohesion in mitosis stabilizing cohesin complex association with chromatin. May antagonize the action of WAPL which stimulates cohesin dissociation from chromatin. Cohesion ensures that chromosome partitioning is accurate in both meiotic and mitotic cells and plays an important role in DNA repair. Required for efficient DNA double-stranded break repair. This is Sororin (CDCA5) from Homo sapiens (Human).